A 331-amino-acid chain; its full sequence is Ornithine carbamoyltransferase (331 aa).

Residues 55 to 58 (STRT), Q82, R106, and 133 to 136 (HPTQ) contribute to the carbamoyl phosphate site. L-ornithine contacts are provided by residues N166, D230, and 234–235 (SM). Residues 272-273 (CL) and R317 each bind carbamoyl phosphate.

It belongs to the aspartate/ornithine carbamoyltransferase superfamily. OTCase family.

The protein localises to the cytoplasm. The enzyme catalyses carbamoyl phosphate + L-ornithine = L-citrulline + phosphate + H(+). It functions in the pathway amino-acid biosynthesis; L-arginine biosynthesis; L-arginine from L-ornithine and carbamoyl phosphate: step 1/3. Its function is as follows. Reversibly catalyzes the transfer of the carbamoyl group from carbamoyl phosphate (CP) to the N(epsilon) atom of ornithine (ORN) to produce L-citrulline. The sequence is that of Ornithine carbamoyltransferase from Neisseria gonorrhoeae (strain ATCC 700825 / FA 1090).